Consider the following 310-residue polypeptide: AT-hook motif nuclear-localized protein 15 (310 aa).

Disordered stretches follow at residues 15–112 (VESP…KESP) and 239–310 (EEEQ…PPSY). Polar residues-rich tracts occupy residues 31-41 (SNNNNPPTMTR) and 51-67 (TTNN…SQEE). Residues 88–100 (RRPRGRPPGSKNK) constitute a DNA-binding region (a.T hook). The segment covering 94–104 (PPGSKNKPKSP) has biased composition (low complexity). Residues 112 to 251 (PNSLQSHVLE…QQQEQPLQLE (140 aa)) form the PPC domain. The span at 301 to 310 (GPPPRAPPSY) shows a compositional bias: pro residues.

It localises to the nucleus. In terms of biological role, transcription factor that specifically binds AT-rich DNA sequences related to the nuclear matrix attachment regions (MARs). Binds the DNA sequence GNFEI (GA-negative feedback element I) in the GA3OX1 promoter. Negatively regulates plant innate immunity (PTI) to pathogens through the down-regulation of the PAMP-triggered FRK1 expression. The sequence is that of AT-hook motif nuclear-localized protein 15 from Arabidopsis thaliana (Mouse-ear cress).